Reading from the N-terminus, the 1187-residue chain is DNA-directed RNA polymerase subunit beta (1187 aa).

A disordered region spans residues 1150-1187 (KDEDDDPASSADDLGFNIGARPDAAAKEDQKAEEPEYQ). The span at 1173–1187 (AAAKEDQKAEEPEYQ) shows a compositional bias: basic and acidic residues.

This sequence belongs to the RNA polymerase beta chain family. The RNAP catalytic core consists of 2 alpha, 1 beta, 1 beta' and 1 omega subunit. When a sigma factor is associated with the core the holoenzyme is formed, which can initiate transcription.

The catalysed reaction is RNA(n) + a ribonucleoside 5'-triphosphate = RNA(n+1) + diphosphate. Functionally, DNA-dependent RNA polymerase catalyzes the transcription of DNA into RNA using the four ribonucleoside triphosphates as substrates. This chain is DNA-directed RNA polymerase subunit beta, found in Bifidobacterium longum (strain NCC 2705).